Here is a 476-residue protein sequence, read N- to C-terminus: Calcitonin gene-related peptide type 1 receptor (476 aa).

Residues 1 to 33 form the signal peptide; it reads METLQMGLLSRSALFKYIIIFLIMINTRGYVLA. At 34–154 the chain is on the extracellular side; the sequence is SQEQEAKTSV…FTHEKVKTAL (121 aa). 3 cysteine pairs are disulfide-bonded: Cys63-Cys89, Cys80-Cys120, and Cys103-Cys142. Residues Asn81, Asn133, and Asn138 are each glycosylated (N-linked (GlcNAc...) asparagine). Residues 155 to 179 traverse the membrane as a helical segment; that stretch reads NLYYLTIIGHGLSIASLLISLGIFF. Topologically, residues 180–190 are cytoplasmic; the sequence is YFKNLSCQRIT. A helical transmembrane segment spans residues 191–213; the sequence is LHKNLFFSFVCNSIITIISLSAV. Residues 214–224 are Extracellular-facing; it reads ANNQALVATNP. Residues 225–253 form a helical membrane-spanning segment; the sequence is VICKISQFIHLYLMGCNYFWMLCEGIYLH. Over 254-267 the chain is Cytoplasmic; the sequence is TLIVVAVFAEKQHL. A helical transmembrane segment spans residues 268–288; sequence MWYYLLGWGFPLIPACIHAVA. The Extracellular segment spans residues 289–304; sequence RSLYYNDNCWISSETH. The helical transmembrane segment at 305–329 threads the bilayer; the sequence is LLYIIHGPICAALLVNLFFLLNIVR. The Cytoplasmic portion of the chain corresponds to 330-344; it reads VLITKLKVTHQAESN. A helical membrane pass occupies residues 345–366; it reads LYMKAVRATLILVPLLGIEFVL. Topologically, residues 367-381 are extracellular; sequence FPWKPEGRIAEEIYD. A helical membrane pass occupies residues 382 to 402; the sequence is YVMHILMHYQGLLVATIFCFF. Topologically, residues 403–476 are cytoplasmic; sequence NGEVQAVLKR…VFFKTEKQYM (74 aa).

It belongs to the G-protein coupled receptor 2 family.

The protein resides in the cell membrane. May function as G protein-coupled receptor for calcitonin-gene-related peptides and adrenomedullin. Specificity may be modulated by accessory proteins. May activate cAMP-dependent pathway. This is Calcitonin gene-related peptide type 1 receptor (calcrl) from Xenopus laevis (African clawed frog).